Here is a 659-residue protein sequence, read N- to C-terminus: UvrABC system protein B (659 aa).

A Helicase ATP-binding domain is found at 27 to 414; sequence EGLEQNKKSQ…AHGEIVKQII (388 aa). Residue 40–47 coordinates ATP; that stretch reads GVTGSGKT. Positions 93–116 match the Beta-hairpin motif; it reads YFDYYRPEAYMPNTDTYIDKTTKS. Residues 432 to 594 form the Helicase C-terminal domain; it reads QVEDMFDEIQ…IIPKTIIKPI (163 aa). A UVR domain is found at 624 to 659; sequence EALVKDLRNQMLDASKQLNFERAAELRDIILELEAN.

This sequence belongs to the UvrB family. In terms of assembly, forms a heterotetramer with UvrA during the search for lesions. Interacts with UvrC in an incision complex.

Its subcellular location is the cytoplasm. The UvrABC repair system catalyzes the recognition and processing of DNA lesions. A damage recognition complex composed of 2 UvrA and 2 UvrB subunits scans DNA for abnormalities. Upon binding of the UvrA(2)B(2) complex to a putative damaged site, the DNA wraps around one UvrB monomer. DNA wrap is dependent on ATP binding by UvrB and probably causes local melting of the DNA helix, facilitating insertion of UvrB beta-hairpin between the DNA strands. Then UvrB probes one DNA strand for the presence of a lesion. If a lesion is found the UvrA subunits dissociate and the UvrB-DNA preincision complex is formed. This complex is subsequently bound by UvrC and the second UvrB is released. If no lesion is found, the DNA wraps around the other UvrB subunit that will check the other stand for damage. The chain is UvrABC system protein B from Mycoplasma mobile (strain ATCC 43663 / 163K / NCTC 11711) (Mesomycoplasma mobile).